The sequence spans 874 residues: Leucine--tRNA ligase (874 aa).

A 'HIGH' region motif is present at residues 43 to 53 (PYPSGRIHIGH). Positions 630–634 (KMSKS) match the 'KMSKS' region motif. Lys633 provides a ligand contact to ATP.

It belongs to the class-I aminoacyl-tRNA synthetase family.

The protein resides in the cytoplasm. It carries out the reaction tRNA(Leu) + L-leucine + ATP = L-leucyl-tRNA(Leu) + AMP + diphosphate. The chain is Leucine--tRNA ligase from Bradyrhizobium diazoefficiens (strain JCM 10833 / BCRC 13528 / IAM 13628 / NBRC 14792 / USDA 110).